The following is a 958-amino-acid chain: UPF0182 protein TW644 (958 aa).

A run of 7 helical transmembrane segments spans residues 14–34 (IAILSVVAFLVLIALTAFFLV), 59–79 (IFVVFCLAFVFVSIFLWLCMF), 107–127 (KIVVLLVSLGLGAVAGIFAAS), 166–186 (LFFLLVTFVLGGILSILISVV), 205–225 (VQYAVLAAGIFVLLGLEFWLN), 249–269 (LIPGFAVLALVALGVALLFCI), and 280–300 (IIGVALAVVSALVVITALPWG).

It belongs to the UPF0182 family.

The protein localises to the cell membrane. The protein is UPF0182 protein TW644 of Tropheryma whipplei (strain TW08/27) (Whipple's bacillus).